Consider the following 628-residue polypeptide: Exonuclease V, mitochondrial (628 aa).

Residues 1-21 (MSRFWHFKKFYFTSCYSMQRM) constitute a mitochondrion transit peptide. Residues 37-58 (TSEHEQVQSISKEESRSLSSND) form a disordered region. Basic and acidic residues predominate over residues 38–52 (SEHEQVQSISKEESR). [4Fe-4S] cluster-binding residues include cysteine 164, cysteine 586, cysteine 589, and cysteine 595.

This sequence belongs to the EXO5 family. Monomer. The cofactor is Mg(2+). [4Fe-4S] cluster serves as cofactor.

Its subcellular location is the mitochondrion. Single strand DNA specific 5' exonuclease involved in mitochondrial DNA replication and recombination. Releases dinucleotides as main products of catalysis. Has the capacity to slide across 5'double-stranded DNA or 5'RNA sequences and resumes cutting two nucleotides downstream of the double-stranded-to-single-stranded junction or RNA-to-DNA junction, respectively. This chain is Exonuclease V, mitochondrial (DEM1), found in Candida albicans (strain SC5314 / ATCC MYA-2876) (Yeast).